Consider the following 177-residue polypeptide: Dual-action ribosomal maturation protein DarP (177 aa).

The protein belongs to the DarP family.

The protein resides in the cytoplasm. Functionally, member of a network of 50S ribosomal subunit biogenesis factors which assembles along the 30S-50S interface, preventing incorrect 23S rRNA structures from forming. Promotes peptidyl transferase center (PTC) maturation. The chain is Dual-action ribosomal maturation protein DarP from Histophilus somni (strain 129Pt) (Haemophilus somnus).